The primary structure comprises 597 residues: Aspartate--tRNA(Asp/Asn) ligase (597 aa).

Glu-175 serves as a coordination point for L-aspartate. The tract at residues 199-202 (QQYK) is aspartate. L-aspartate-binding residues include Arg-221 and His-454. 221–223 (RDE) is an ATP binding site. Glu-488 lines the ATP pocket. L-aspartate is bound at residue Arg-495. 540–543 (GVDR) serves as a coordination point for ATP.

This sequence belongs to the class-II aminoacyl-tRNA synthetase family. Type 1 subfamily. As to quaternary structure, homodimer.

It is found in the cytoplasm. It carries out the reaction tRNA(Asx) + L-aspartate + ATP = L-aspartyl-tRNA(Asx) + AMP + diphosphate. Aspartyl-tRNA synthetase with relaxed tRNA specificity since it is able to aspartylate not only its cognate tRNA(Asp) but also tRNA(Asn). Reaction proceeds in two steps: L-aspartate is first activated by ATP to form Asp-AMP and then transferred to the acceptor end of tRNA(Asp/Asn). The polypeptide is Aspartate--tRNA(Asp/Asn) ligase (Bartonella quintana (strain Toulouse) (Rochalimaea quintana)).